The following is a 567-amino-acid chain: Potassium-transporting ATPase potassium-binding subunit (567 aa).

11 helical membrane-spanning segments follow: residues 5 to 25 (GWIQILVFCGIIILLVKPLGG), 64 to 84 (TTYAASLLLFNLAGFLLLYML), 136 to 156 (GLTVQNFVSAATGVAIAIALI), 179 to 199 (LYVLLPLCIILTLAFVSLGVP), 254 to 274 (ISNMIQMVAIFAIGASLTNVF), 285 to 305 (WAIFAAMGILFVAGVAICYWA), 332 to 352 (IAMSALFAVVTTAASCGAVIA), 359 to 376 (ALGGMIPMINMMLGEIII), 421 to 441 (MLAVLCLPLSILGFTAIASVI), 486 to 506 (ITIGLAMLMGRFLVILPAMAI), and 529 to 549 (LFVGLLIGVILVVGGLIFFPA).

Belongs to the KdpA family. In terms of assembly, the system is composed of three essential subunits: KdpA, KdpB and KdpC.

The protein localises to the cell inner membrane. In terms of biological role, part of the high-affinity ATP-driven potassium transport (or Kdp) system, which catalyzes the hydrolysis of ATP coupled with the electrogenic transport of potassium into the cytoplasm. This subunit binds the periplasmic potassium ions and delivers the ions to the membrane domain of KdpB through an intramembrane tunnel. The polypeptide is Potassium-transporting ATPase potassium-binding subunit (Brucella anthropi (strain ATCC 49188 / DSM 6882 / CCUG 24695 / JCM 21032 / LMG 3331 / NBRC 15819 / NCTC 12168 / Alc 37) (Ochrobactrum anthropi)).